The sequence spans 481 residues: MNEVSVIKEGWLHKRGEYIKTWRPRYFLLKSDGSFIGYKERPEAPDQTLPPLNNFSVAECQLMKTERPRPNTFVIRCLQWTTVIERTFHVDSPDEREEWMRAIQMVANSLKQRGPGEDAMDYKCGSPSDSSTSEMMEVAVNKARAKVTMNDFDYLKLLGKGTFGKVILVREKATGRYYAMKILRKEVIIAKDEVAHTVTESRVLQNTRHPFLTALKYAFQTHDRLCFVMEYANGGELFFHLSRERVFTEDRARFYGAEIVSALEYLHSRDVVYRDIKLENLMLDKDGHIKITDFGLCKEGISDGATMKTFCGTPEYLAPEVLEDNDYGRAVDWWGLGVVMYEMMCGRLPFYNQDHERLFELILMEEIRFPRTLGPEAKSLLAGLLKKDPKQRLGGGPSDAKEVMEHRFFLSINWQDVVQKKLLPPFKPQVTSEVDTRYFDDEFTAQSITITPPDRYDSLDPLELDQRTHFPQFSYSASIRE.

Met-1 carries the N-acetylmethionine modification. The PH domain occupies 5–108 (SVIKEGWLHK…WMRAIQMVAN (104 aa)). A Phosphoserine modification is found at Ser-34. Cys-60 and Cys-77 are disulfide-bonded. Position 126 is a phosphoserine (Ser-126). O-linked (GlcNAc) serine glycans are attached at residues Ser-128 and Ser-131. In terms of domain architecture, Protein kinase spans 152–409 (FDYLKLLGKG…AKEVMEHRFF (258 aa)). ATP-binding positions include 158-166 (LGKGTFGKV) and Lys-181. Asp-275 functions as the Proton acceptor in the catalytic mechanism. 2 residues coordinate Mn(2+): Asn-280 and Asp-293. A disulfide bridge connects residues Cys-297 and Cys-311. O-linked (GlcNAc) threonine glycosylation is present at Thr-306. Thr-309 is modified (phosphothreonine; by PDPK1). Residue Thr-313 is glycosylated (O-linked (GlcNAc) threonine). The 72-residue stretch at 410 to 481 (LSINWQDVVQ…QFSYSASIRE (72 aa)) folds into the AGC-kinase C-terminal domain. Ser-447 bears the Phosphoserine mark. Thr-451 bears the Phosphothreonine mark. A phosphoserine; by MTOR mark is found at Ser-474 and Ser-478. The O-linked (GlcNAc) serine; alternate glycan is linked to Ser-474.

The protein belongs to the protein kinase superfamily. AGC Ser/Thr protein kinase family. RAC subfamily. Interacts with BTBD10. Interacts with KCTD20. Interacts (via PH domain) with MTCP1, TCL1A and TCL1B; this interaction may facilitate AKT2 oligomerization and phosphorylation, hence increasing kinase activity. Interacts with PHB2; this interaction may be important for myogenic differentiation. Interacts (when phosphorylated) with CLIP3/ClipR-59; this interaction promotes cell membrane localization. Interacts with WDFY2 (via WD repeats 1-3). In terms of processing, phosphorylation on Thr-309 and Ser-474 is required for full activity. Phosphorylation of the activation loop at Thr-309 by PDPK1/PDK1 is a prerequisite for full activation. Phosphorylated and activated by PDPK1/PDK1 in the presence of phosphatidylinositol 3,4,5-trisphosphate. Phosphorylation by mTORC2 in response to growth factors plays a key role in AKT1 activation: mTORC2 phosphorylates different sites depending on the context, such as Ser-474 or Ser-478, thereby facilitating subsequent phosphorylation of the activation loop by PDPK1/PDK1. Post-translationally, ubiquitinated; undergoes both 'Lys-48'- and 'Lys-63'-linked polyubiquitination. TRAF6-induced 'Lys-63'-linked AKT2 ubiquitination. When fully phosphorylated and translocated into the nucleus, undergoes 'Lys-48'-polyubiquitination catalyzed by TTC3, leading to its degradation by the proteasome. O-GlcNAcylation at Thr-306 and Thr-313 inhibits activating phosphorylation at Thr-309 via disrupting the interaction between AKT and PDPK1/PDK1.

The protein resides in the cytoplasm. It is found in the nucleus. The protein localises to the cell membrane. It localises to the early endosome. It carries out the reaction L-seryl-[protein] + ATP = O-phospho-L-seryl-[protein] + ADP + H(+). The enzyme catalyses L-threonyl-[protein] + ATP = O-phospho-L-threonyl-[protein] + ADP + H(+). Two specific sites, one in the kinase domain (Thr-309) and the other in the C-terminal regulatory region (Ser-474), need to be phosphorylated for its full activation. AKT2 phosphorylation of PKP1 is induced by insulin. Inhibited by Akt inhibitor MK2206. Functionally, AKT2 is one of 3 closely related serine/threonine-protein kinases (AKT1, AKT2 and AKT3) called the AKT kinases, and which regulate many processes including metabolism, proliferation, cell survival, growth and angiogenesis. This is mediated through serine and/or threonine phosphorylation of a range of downstream substrates. Over 100 substrate candidates have been reported so far, but for most of them, no isoform specificity has been reported. AKT is responsible of the regulation of glucose uptake by mediating insulin-induced translocation of the SLC2A4/GLUT4 glucose transporter to the cell surface. Phosphorylation of PTPN1 at 'Ser-50' negatively modulates its phosphatase activity preventing dephosphorylation of the insulin receptor and the attenuation of insulin signaling. Phosphorylation of TBC1D4 triggers the binding of this effector to inhibitory 14-3-3 proteins, which is required for insulin-stimulated glucose transport. AKT also regulates the storage of glucose in the form of glycogen by phosphorylating GSK3A at 'Ser-21' and GSK3B at 'Ser-9', resulting in inhibition of its kinase activity. Phosphorylation of GSK3 isoforms by AKT is also thought to be one mechanism by which cell proliferation is driven. AKT also regulates cell survival via the phosphorylation of MAP3K5 (apoptosis signal-related kinase). Phosphorylation of 'Ser-83' decreases MAP3K5 kinase activity stimulated by oxidative stress and thereby prevents apoptosis. AKT mediates insulin-stimulated protein synthesis by phosphorylating TSC2 at 'Ser-939' and 'Thr-1462', thereby activating mTORC1 signaling and leading to both phosphorylation of 4E-BP1 and in activation of RPS6KB1. AKT is involved in the phosphorylation of members of the FOXO factors (Forkhead family of transcription factors), leading to binding of 14-3-3 proteins and cytoplasmic localization. In particular, FOXO1 is phosphorylated at 'Thr-24', 'Ser-256' and 'Ser-319'. FOXO3 and FOXO4 are phosphorylated on equivalent sites. AKT has an important role in the regulation of NF-kappa-B-dependent gene transcription and positively regulates the activity of CREB1 (cyclic AMP (cAMP)-response element binding protein). The phosphorylation of CREB1 induces the binding of accessory proteins that are necessary for the transcription of pro-survival genes such as BCL2 and MCL1. AKT phosphorylates 'Ser-454' on ATP citrate lyase (ACLY), thereby potentially regulating ACLY activity and fatty acid synthesis. Activates the 3B isoform of cyclic nucleotide phosphodiesterase (PDE3B) via phosphorylation of 'Ser-273', resulting in reduced cyclic AMP levels and inhibition of lipolysis. Phosphorylates PIKFYVE on 'Ser-318', which results in increased PI(3)P-5 activity. The Rho GTPase-activating protein DLC1 is another substrate and its phosphorylation is implicated in the regulation cell proliferation and cell growth. AKT plays a role as key modulator of the AKT-mTOR signaling pathway controlling the tempo of the process of newborn neurons integration during adult neurogenesis, including correct neuron positioning, dendritic development and synapse formation. Signals downstream of phosphatidylinositol 3-kinase (PI(3)K) to mediate the effects of various growth factors such as platelet-derived growth factor (PDGF), epidermal growth factor (EGF), insulin and insulin-like growth factor I (IGF-I). AKT mediates the antiapoptotic effects of IGF-I. Essential for the SPATA13-mediated regulation of cell migration and adhesion assembly and disassembly. May be involved in the regulation of the placental development. In response to lysophosphatidic acid stimulation, inhibits the ciliogenesis cascade. In this context, phosphorylates WDR44, hence stabilizing its interaction with Rab11 and preventing the formation of the ciliogenic Rab11-FIP3-RAB3IP complex. Also phosphorylates RAB3IP/Rabin8, thus may affect RAB3IP guanine nucleotide exchange factor (GEF) activity toward Rab8, which is important for cilia growth. Phosphorylates PKP1, facilitating its interaction with YWHAG and translocation to the nucleus, ultimately resulting in a reduction in keratinocyte intercellular adhesion. Phosphorylation of PKP1 increases PKP1 protein stability, translocation to the cytoplasm away from desmosome plaques and PKP1-driven cap-dependent translation. Its function is as follows. Several AKT2-specific substrates have been identified, including ANKRD2, C2CD5, CLK2 and PITX2. May play a role in myoblast differentiation. In this context, may act through PITX2 phosphorylation. Unphosphorylated PITX2 associates with an ELAVL1/HuR-containing complex, which stabilizes cyclin mRNA and ensuring cell proliferation. Phosphorylation by AKT2 impairs this association, leading to CCND1 mRNA destabilization and progression towards differentiation. Also involved in the negative regulation of myogenesis in response to stress conditions. In this context, acts by phosphorylating ANKRD2. May also be a key regulator of glucose uptake. Regulates insulin-stimulated glucose transport by the increase of glucose transporter GLUT4 translocation from intracellular stores to the plasma membrane. In this context, acts by phosphorylating C2CD5/CDP138 on 'Ser-197' in insulin-stimulated adipocytes. Through the phosphorylation of CLK2 on 'Thr-343', involved in insulin-regulated suppression of hepatic gluconeogenesis. This Mus musculus (Mouse) protein is RAC-beta serine/threonine-protein kinase (Akt2).